We begin with the raw amino-acid sequence, 171 residues long: Zinc finger A20 and AN1 domain-containing stress-associated protein 8 (171 aa).

Residues 11 to 45 (PEGPILCINNCGFFGSAATMNMCSKCHKEMIMKQE) form an A20-type zinc finger. Zn(2+) is bound by residues Cys17, Cys21, Cys33, Cys36, Cys112, Cys115, Cys126, Cys128, Cys133, His136, His142, and Cys144. The AN1-type zinc-finger motif lies at 106–152 (REGPNRCSTCRKRVGLTGFNCRCGNLYCAMHRYSDKHDCQFDYRTAA).

Its function is as follows. May be involved in environmental stress response. The sequence is that of Zinc finger A20 and AN1 domain-containing stress-associated protein 8 (SAP8) from Oryza sativa subsp. indica (Rice).